We begin with the raw amino-acid sequence, 206 residues long: Protein GrpE (206 aa).

The protein belongs to the GrpE family. As to quaternary structure, homodimer.

It localises to the cytoplasm. In terms of biological role, participates actively in the response to hyperosmotic and heat shock by preventing the aggregation of stress-denatured proteins, in association with DnaK and GrpE. It is the nucleotide exchange factor for DnaK and may function as a thermosensor. Unfolded proteins bind initially to DnaJ; upon interaction with the DnaJ-bound protein, DnaK hydrolyzes its bound ATP, resulting in the formation of a stable complex. GrpE releases ADP from DnaK; ATP binding to DnaK triggers the release of the substrate protein, thus completing the reaction cycle. Several rounds of ATP-dependent interactions between DnaJ, DnaK and GrpE are required for fully efficient folding. In Shewanella sp. (strain W3-18-1), this protein is Protein GrpE.